Here is a 621-residue protein sequence, read N- to C-terminus: Chaperone protein HscA homolog (621 aa).

This sequence belongs to the heat shock protein 70 family.

Functionally, chaperone involved in the maturation of iron-sulfur cluster-containing proteins. Has a low intrinsic ATPase activity which is markedly stimulated by HscB. In Polynucleobacter necessarius subsp. necessarius (strain STIR1), this protein is Chaperone protein HscA homolog.